We begin with the raw amino-acid sequence, 780 residues long: Reticulon-1 (780 aa).

4 disordered regions span residues 1-76 (MAAP…VAME), 128-176 (QKEN…AEST), 201-223 (RPQE…LDFK), and 293-576 (MTAT…IPGP). A phosphoserine mark is found at serine 13 and serine 70. Serine 327 is modified (phosphoserine). The span at 328–341 (PGSVTPPSSGTEPS) shows a compositional bias: low complexity. Serine 350, serine 352, and serine 487 each carry phosphoserine. A compositionally biased stretch (basic and acidic residues) spans 497-512 (AIREETGSRATEERAP). In terms of domain architecture, Reticulon spans 593–780 (AIDLLYWRDI…KIPGAKRHAE (188 aa)). A run of 2 helical transmembrane segments spans residues 607–627 (IVFG…VVSV) and 709–729 (FAVL…LTLL).

Interacts with NDRG1. Interacts with BACE1. Interacts with TMEM33.

It is found in the endoplasmic reticulum membrane. Its subcellular location is the golgi apparatus membrane. Functionally, inhibits amyloid precursor protein processing, probably by blocking BACE1 activity. The protein is Reticulon-1 (Rtn1) of Mus musculus (Mouse).